The following is a 929-amino-acid chain: Dual serine/threonine and tyrosine protein kinase (929 aa).

A compositionally biased stretch (low complexity) spans 1 to 14; sequence MEGDGVPWGSEPVS. The segment at 1 to 21 is disordered; it reads MEGDGVPWGSEPVSGPGPGGG. Coiled-coil stretches lie at residues 189-215 and 395-431; these read EEDLEVQENNEDAAHVLAELEVTMHHA and RKKENELYESLMNIANRKQEEMKDMIVETLNTMKEEL. Residues 652–906 form the Protein kinase domain; it reads PKLGQELGRG…PLLGIVQPML (255 aa). ATP is bound by residues 658–666 and lysine 681; that span reads LGRGQYGVV. Aspartate 777 (proton acceptor) is an active-site residue.

This sequence belongs to the protein kinase superfamily. Ser/Thr protein kinase family. Predominantly expressed in skeletal muscle and testis. Expressed in basolateral and apical membranes of all tubular epithelia. Expressed in thin ascending limb of the loop of Henle and the distal convoluted tubule. Expressed in all layers of transitional ureteric epithelium and in the ureteric smooth-muscle cells. Weakly expressed in heart, brain, placenta, kidney, pancreas, spleen, thymus, prostate, uterus, small intestine, white blood cells, stomach, spinal cord and adrenal gland. Is widely distributed in the CNS. Also detected in several tumor cell lines. Expressed in the skin.

Its subcellular location is the cytoplasm. The protein localises to the cell membrane. It localises to the apical cell membrane. The protein resides in the basolateral cell membrane. It is found in the cell junction. It catalyses the reaction L-seryl-[protein] + ATP = O-phospho-L-seryl-[protein] + ADP + H(+). It carries out the reaction L-threonyl-[protein] + ATP = O-phospho-L-threonyl-[protein] + ADP + H(+). The enzyme catalyses L-tyrosyl-[protein] + ATP = O-phospho-L-tyrosyl-[protein] + ADP + H(+). Its function is as follows. Acts as a positive regulator of ERK phosphorylation downstream of fibroblast growth factor-receptor activation. Involved in the regulation of both caspase-dependent apoptosis and caspase-independent cell death. In the skin, it plays a predominant role in suppressing caspase-dependent apoptosis in response to UV stress in a range of dermal cell types. The chain is Dual serine/threonine and tyrosine protein kinase (DSTYK) from Homo sapiens (Human).